The sequence spans 2492 residues: Polyketide synthase 19 (2492 aa).

The 452-residue stretch at 12-463 (REPIAIVGTS…GTNAHAIVES (452 aa)) folds into the Ketosynthase family 3 (KS3) domain. Catalysis depends on for beta-ketoacyl synthase activity residues C202, H341, and H383. A malonyl-CoA:ACP transacylase (MAT) domain region spans residues 571–866 (VFTGQGAQWA…LEVGPHPALK (296 aa)). Residues 967-1110 (HELLGRSVSH…GRIRLWLEQP (144 aa)) are N-terminal hotdog fold. The tract at residues 967-1270 (HELLGRSVSH…GVQMTAIGKP (304 aa)) is dehydratase (DH) domain. A PKS/mFAS DH domain is found at 967–1273 (HELLGRSVSH…MTAIGKPPDR (307 aa)). The Proton acceptor; for dehydratase activity role is filled by H1001. Residues 1125–1273 (MSELNMAQVY…MTAIGKPPDR (149 aa)) are C-terminal hotdog fold. D1183 acts as the Proton donor; for dehydratase activity in catalysis. Residues 1431–1604 (LGAIVKQLGH…KTTGFSGVDI (174 aa)) form a C-methyltransferase (CMeT) domain region. The interval 2118-2293 (SYLLFGMTGD…AGSIVHISVL (176 aa)) is ketoreductase (KR) domain. Residues 2404–2479 (PILEKRFAQA…RVCDDVLVDW (76 aa)) form the Carrier domain. The residue at position 2438 (S2438) is an O-(pantetheine 4'-phosphoryl)serine.

Highly reducing polyketide synthase; part of the gene cluster that mediates the biosynthesis of fujikurins A-D, secondary metabolites playing a role during rice infection. The polyketide synthase PKS19 acts with the trans-enoyl reductase FFUJ_12240 and the polyketide transferase FFUJ_12241 to produce fujikurins, however, the biosynthesis pathway has not been identified yet. The chain is Polyketide synthase 19 from Gibberella fujikuroi (strain CBS 195.34 / IMI 58289 / NRRL A-6831) (Bakanae and foot rot disease fungus).